The sequence spans 478 residues: Protein nucleotidyltransferase YdiU (478 aa).

Residues glycine 84, glycine 86, arginine 87, lysine 107, aspartate 119, glycine 120, arginine 170, and arginine 177 each contribute to the ATP site. Aspartate 246 serves as the catalytic Proton acceptor. The Mg(2+) site is built by asparagine 247 and aspartate 256. Residue aspartate 256 coordinates ATP.

The protein belongs to the SELO family. Requires Mg(2+) as cofactor. The cofactor is Mn(2+).

The catalysed reaction is L-seryl-[protein] + ATP = 3-O-(5'-adenylyl)-L-seryl-[protein] + diphosphate. It catalyses the reaction L-threonyl-[protein] + ATP = 3-O-(5'-adenylyl)-L-threonyl-[protein] + diphosphate. The enzyme catalyses L-tyrosyl-[protein] + ATP = O-(5'-adenylyl)-L-tyrosyl-[protein] + diphosphate. It carries out the reaction L-histidyl-[protein] + UTP = N(tele)-(5'-uridylyl)-L-histidyl-[protein] + diphosphate. The catalysed reaction is L-seryl-[protein] + UTP = O-(5'-uridylyl)-L-seryl-[protein] + diphosphate. It catalyses the reaction L-tyrosyl-[protein] + UTP = O-(5'-uridylyl)-L-tyrosyl-[protein] + diphosphate. Its function is as follows. Nucleotidyltransferase involved in the post-translational modification of proteins. It can catalyze the addition of adenosine monophosphate (AMP) or uridine monophosphate (UMP) to a protein, resulting in modifications known as AMPylation and UMPylation. The polypeptide is Protein nucleotidyltransferase YdiU (Escherichia coli O81 (strain ED1a)).